The sequence spans 977 residues: MQSNLLKVLGVLAIVATLVCFIFAALGMIGAVKVGDGCYMRYAPDGKGGSDSITGTITLNANANYVNTSKMLPDGTTQLIPDPNRYGEWLNTQVLVENNQPVNLQVVGQVSLCLAYVPKDNVQFTESTRPGKSNLDDKGNMIPIPRITDANNPPLSLIMDAKNNEWRNIAELYANDRVLVSVSPNFANTDATVEDAFKGTKVTKNCSQGQTSYEPICGKYSVYHGEYVNDCEWRDKYWKCNYHHSCDTSFWGGCGLGCPCAFGKICCGEWICDSCGAWVNIRTSMPEAYKDDGSVTKAWSDNINNLFFDLFNLECSNNSKTLPNGQCPDAVRDRSPKNLDFIKGRCSGTWVEDQCNDGTVSTPELSNYKYFWYTADGKGGKGPTGLIYQMNDAGSVSQALPSKLEFAKFVADTDQPADYKDKDGKYLYKVIYNIPFNSNTEKSYLQYRLWSPTSQDASKNTGGYVLNIKQTKCYRENGNSFNDTFDDRGRVQYIIVKPSENPNTSGKTYSPQGINVNSDGKYNFNANEAGYIWMKILNDPSNNLRDYKDSEGNYKVHFSTSLKVGSFTIKVMNPLLELFKTKVQGAATSIFKNMVCYKANDSSSCTNFFTYIKAILILYVMTYGAMFLLGFAKINQKELVTRIAKIGVVSGLMNGNTFEFFNNYLFDAITNFSDAIIANMSGYSLYTSTNTISNPFMFLDAVMSKIFFSQTFIAQLLSLLSLGLSGIIYFIITFIAVGIVIITALRAVAVYIMAFMATCILIGIAPLFISFLLFDFTRYLFDNWVRFTIRYMIEPVVMMAGIIVLTQLFTIYLDFVLGYSVCWKCALPIKIPFIGTILPIALLNVPIFCINWFAPWGMDYMSGMMGVNMQNIVALVIIAYGMYGYVEFSGRMVAKLTSAAGPSATEIGGRMSHDAGQKALSPIGMDDKTRQGITGRAEARLKQRNKTLDQAEKNRKNTPKEGGEKTNAEPPQPEARG.

The first 24 residues, 1 to 24 (MQSNLLKVLGVLAIVATLVCFIFA), serve as a signal peptide directing secretion. The disordered stretch occupies residues 125-146 (TESTRPGKSNLDDKGNMIPIPR). The next 6 helical transmembrane spans lie at 612–632 (IKAI…LGFA), 722–742 (LGLS…IVII), 754–774 (AFMA…FLLF), 796–816 (VVMM…LDFV), 833–853 (FIGT…INWF), and 866–886 (GVNM…YGYV). A disordered region spans residues 918-977 (KALSPIGMDDKTRQGITGRAEARLKQRNKTLDQAEKNRKNTPKEGGEKTNAEPPQPEARG). Residues 937–967 (AEARLKQRNKTLDQAEKNRKNTPKEGGEKTN) are compositionally biased toward basic and acidic residues.

It belongs to the TrbL/VirB6 family.

It localises to the cell membrane. This is an uncharacterized protein from Rickettsia felis (strain ATCC VR-1525 / URRWXCal2) (Rickettsia azadi).